The chain runs to 283 residues: Probable protein phosphatase 2C 58 (283 aa).

The region spanning 35–282 (THGFHCVKGK…DDISCIVVKF (248 aa)) is the PPM-type phosphatase domain. 4 residues coordinate Mn(2+): Asp72, Gly73, Asp234, and Asp273.

It belongs to the PP2C family. The cofactor is Mg(2+). Requires Mn(2+) as cofactor.

It catalyses the reaction O-phospho-L-seryl-[protein] + H2O = L-seryl-[protein] + phosphate. The enzyme catalyses O-phospho-L-threonyl-[protein] + H2O = L-threonyl-[protein] + phosphate. The chain is Probable protein phosphatase 2C 58 from Arabidopsis thaliana (Mouse-ear cress).